We begin with the raw amino-acid sequence, 508 residues long: Photosystem II CP47 reaction center protein (508 aa).

Helical transmembrane passes span Ala-21–Ser-36, Ile-101–Trp-115, Gly-140–Phe-156, Ile-203–Ser-218, Val-237–Val-252, and Asn-457–Arg-472.

It belongs to the PsbB/PsbC family. PsbB subfamily. In terms of assembly, PSII is composed of 1 copy each of membrane proteins PsbA, PsbB, PsbC, PsbD, PsbE, PsbF, PsbH, PsbI, PsbJ, PsbK, PsbL, PsbM, PsbT, PsbX, PsbY, PsbZ, Psb30/Ycf12, at least 3 peripheral proteins of the oxygen-evolving complex and a large number of cofactors. It forms dimeric complexes. The cofactor is Binds multiple chlorophylls. PSII binds additional chlorophylls, carotenoids and specific lipids..

The protein resides in the plastid. It localises to the chloroplast thylakoid membrane. Its function is as follows. One of the components of the core complex of photosystem II (PSII). It binds chlorophyll and helps catalyze the primary light-induced photochemical processes of PSII. PSII is a light-driven water:plastoquinone oxidoreductase, using light energy to abstract electrons from H(2)O, generating O(2) and a proton gradient subsequently used for ATP formation. The sequence is that of Photosystem II CP47 reaction center protein from Chaetosphaeridium globosum (Charophycean green alga).